A 63-amino-acid polypeptide reads, in one-letter code: Bowman-Birk type proteinase inhibitor (63 aa).

7 cysteine pairs are disulfide-bonded: C8/C61, C9/C24, C12/C57, C14/C22, C31/C38, C35/C50, and C40/C48.

It belongs to the Bowman-Birk serine protease inhibitor family.

Functionally, this inhibitor has two domains, each with separate antiprotease activity. Inhibits bovine trypsin and chymotrypsin, in a molar ratio of 1:1. The trypsin inhibition of FBI is independent of chymotrypsin inhibition, but the chymotrypsin inhibition is not completely independent of trypsin inhibition. The sequence is that of Bowman-Birk type proteinase inhibitor from Vicia faba (Broad bean).